We begin with the raw amino-acid sequence, 308 residues long: Acetaldehyde dehydrogenase (308 aa).

NAD(+) is bound at residue 10 to 13 (SGNI). The active-site Acyl-thioester intermediate is the C128. NAD(+) is bound by residues 159–167 (SAGPGTRAN) and N285.

This sequence belongs to the acetaldehyde dehydrogenase family.

It catalyses the reaction acetaldehyde + NAD(+) + CoA = acetyl-CoA + NADH + H(+). The polypeptide is Acetaldehyde dehydrogenase (Salinispora tropica (strain ATCC BAA-916 / DSM 44818 / JCM 13857 / NBRC 105044 / CNB-440)).